The sequence spans 241 residues: GLIPR1-like protein 1 (241 aa).

The signal sequence occupies residues 1 to 22 (MILRKKLSYLWTLGLCLVASKS). The region spanning 39–172 (LRLHNEARTN…PDSALLVCNY (134 aa)) is the SCP domain. Ser-220 is lipidated: GPI-anchor amidated serine. Positions 221–241 (GTRQLIACNPLYLISVLLTIF) are cleaved as a propeptide — removed in mature form.

It belongs to the CRISP family. As to quaternary structure, part of a oolemmal binding multimeric complex (IZUMO1 complex) composed at least of IZUMO1 and GLIPR1L1; the complex assemblage is influenced by the maturation status of the male germ cell. Interacts with IZUMO1. N-glycosylated. N-glycosylation decreases during the transit in the caput. Highly expressed in testis, where it localizes to round and elongating spermatids and differentiated spermatozoa in the seminiferous tubules and epididymis (at protein level).

The protein resides in the cytoplasmic vesicle. The protein localises to the secretory vesicle. It is found in the acrosome. Its subcellular location is the cell membrane. It localises to the membrane raft. Required for optimal fertilization at the stage of sperm-oocyte fusion, plays a role in optimizing acrosome function, the translocation of IZUMO1 during the acrosome reaction and the fertilization process. Component of epididymosomes, one type of membranous microvesicules which mediate the transfer of lipids and proteins to spermatozoa plasma membrane during epididymal maturation. Also a component of the CD9-positive microvesicules found in the cauda region. The polypeptide is GLIPR1-like protein 1 (Bos taurus (Bovine)).